The following is a 20-amino-acid chain: Acidic phospholipase A2 CbIbeta (20 aa).

The protein belongs to the phospholipase A2 family. Group II subfamily. D49 sub-subfamily. Heterodimer of an acidic subunit (CbIalpha or CbIbeta) and a basic subunit (CbII). The acidic subunit (CbI) is non-toxic, and increases the toxicity of the basic subunit (CbII). It depends on Ca(2+) as a cofactor. Contains 7 disulfide bonds. Expressed by the venom gland.

It localises to the secreted. It carries out the reaction a 1,2-diacyl-sn-glycero-3-phosphocholine + H2O = a 1-acyl-sn-glycero-3-phosphocholine + a fatty acid + H(+). Its function is as follows. Heterodimer: presynaptic neurotoxin. Functionally, monomer: Snake venom phospholipase A2 (PLA2) is inactive towards micellar phosphatidylcholine but is weakly active towards non-micellar dithiolecithin. PLA2 catalyzes the calcium-dependent hydrolysis of the 2-acyl groups in 3-sn-phosphoglycerides. This chain is Acidic phospholipase A2 CbIbeta, found in Pseudocerastes fieldi (Field's horned viper).